The sequence spans 332 residues: 2,3-diketo-L-gulonate reductase (332 aa).

His44 serves as the catalytic Proton donor. NAD(+) contacts are provided by residues 168 to 174 (ITMVDMS), 224 to 225 (WK), and 304 to 306 (GHE).

It belongs to the LDH2/MDH2 oxidoreductase family. DlgD subfamily. Homodimer.

It is found in the cytoplasm. It carries out the reaction 3-dehydro-L-gulonate + NAD(+) = 2,3-dioxo-L-gulonate + NADH + H(+). It catalyses the reaction 3-dehydro-L-gulonate + NADP(+) = 2,3-dioxo-L-gulonate + NADPH + H(+). Catalyzes the reduction of 2,3-diketo-L-gulonate in the presence of NADH, to form 3-keto-L-gulonate. This Salmonella paratyphi A (strain ATCC 9150 / SARB42) protein is 2,3-diketo-L-gulonate reductase.